The sequence spans 726 residues: Catalase-peroxidase (726 aa).

A compositionally biased stretch (polar residues) spans 1–13; sequence MSMSEETNNSLSS. Positions 1-34 are disordered; it reads MSMSEETNNSLSSGKCPFHHGGSDQSAGEGTGSR. Positions 105 to 226 form a cross-link, tryptophyl-tyrosyl-methioninium (Trp-Tyr) (with M-252); the sequence is WHGAGTYRSV…LAATEMGLIY (122 aa). The active-site Proton acceptor is H106. Residues 226–252 constitute a cross-link (tryptophyl-tyrosyl-methioninium (Tyr-Met) (with W-105)); that stretch reads YVNPEGPNASGEPLSAAAAIRATFGNM. H267 lines the heme b pocket.

This sequence belongs to the peroxidase family. Peroxidase/catalase subfamily. In terms of assembly, homodimer or homotetramer. Requires heme b as cofactor. Formation of the three residue Trp-Tyr-Met cross-link is important for the catalase, but not the peroxidase activity of the enzyme.

It catalyses the reaction H2O2 + AH2 = A + 2 H2O. The enzyme catalyses 2 H2O2 = O2 + 2 H2O. Its function is as follows. Bifunctional enzyme with both catalase and broad-spectrum peroxidase activity. In Enterobacter sp. (strain 638), this protein is Catalase-peroxidase.